Reading from the N-terminus, the 109-residue chain is Putative double-stranded DNA mimic protein plu2488 (109 aa).

The protein belongs to the putative dsDNA mimic protein family.

In terms of biological role, may act as a double-stranded DNA (dsDNA) mimic. Probably regulates the activity of a dsDNA-binding protein. This Photorhabdus laumondii subsp. laumondii (strain DSM 15139 / CIP 105565 / TT01) (Photorhabdus luminescens subsp. laumondii) protein is Putative double-stranded DNA mimic protein plu2488.